A 108-amino-acid chain; its full sequence is UPF0060 membrane protein YnfA (108 aa).

The Periplasmic segment spans residues 1–5 (MLKTT). The helical transmembrane segment at 6–26 (LLFFVTALCEIIGCFLPWLWL) threads the bilayer. At 27-30 (KRGA) the chain is on the cytoplasmic side. The chain crosses the membrane as a helical span at residues 31-51 (SVWWLLPAAASLALFVWLLTL). Residues 52-60 (HPAASGRVY) are Periplasmic-facing. Residues 61-81 (AAYGGVYVCTALLWLRVVDGV) form a helical membrane-spanning segment. The Cytoplasmic segment spans residues 82 to 84 (RLT). A helical membrane pass occupies residues 85–105 (VYDWCGALIALCGMLIIVVGW). Over 106–108 (GRT) the chain is Periplasmic.

It belongs to the UPF0060 family.

The protein resides in the cell inner membrane. This is UPF0060 membrane protein YnfA from Salmonella agona (strain SL483).